We begin with the raw amino-acid sequence, 304 residues long: UDP-3-O-acyl-N-acetylglucosamine deacetylase (304 aa).

Zn(2+)-binding residues include histidine 78, histidine 237, and aspartate 241. Residue histidine 264 is the Proton donor of the active site.

This sequence belongs to the LpxC family. Requires Zn(2+) as cofactor.

The enzyme catalyses a UDP-3-O-[(3R)-3-hydroxyacyl]-N-acetyl-alpha-D-glucosamine + H2O = a UDP-3-O-[(3R)-3-hydroxyacyl]-alpha-D-glucosamine + acetate. The protein operates within glycolipid biosynthesis; lipid IV(A) biosynthesis; lipid IV(A) from (3R)-3-hydroxytetradecanoyl-[acyl-carrier-protein] and UDP-N-acetyl-alpha-D-glucosamine: step 2/6. Its function is as follows. Catalyzes the hydrolysis of UDP-3-O-myristoyl-N-acetylglucosamine to form UDP-3-O-myristoylglucosamine and acetate, the committed step in lipid A biosynthesis. This is UDP-3-O-acyl-N-acetylglucosamine deacetylase from Nitrosococcus oceani (strain ATCC 19707 / BCRC 17464 / JCM 30415 / NCIMB 11848 / C-107).